The sequence spans 443 residues: Leucine/methionine racemase (443 aa).

Residues 110 to 111 and Gln-247 each bind pyridoxal 5'-phosphate; that span reads GS. Lys-273 carries the N6-(pyridoxal phosphate)lysine modification. Thr-302 contacts pyridoxal 5'-phosphate.

The protein belongs to the class-III pyridoxal-phosphate-dependent aminotransferase family. The cofactor is pyridoxal 5'-phosphate.

The catalysed reaction is L-leucine = D-leucine. It carries out the reaction L-methionine = D-methionine. Activity is strongly inhibited by several metal ions, including Co(2+), Zn(2+), Ni(2+), Cu(2+) and Fe(3+), and nonsubstrate amino acids such as L-arginine and L-lysine. Activity is completely abolished in the presence of hydroxylamine, an inhibitor of pyridoxal phosphate-dependent enzymes. Functionally, amino acid racemase with moderate substrate specificity. Is primarily active toward leucine, which is the preferred substrate, and methionine. Also exhibits lower levels of activity toward phenylalanine, alanine and serine. The chain is Leucine/methionine racemase from Thermococcus litoralis (strain ATCC 51850 / DSM 5473 / JCM 8560 / NS-C).